Consider the following 578-residue polypeptide: Phosphatase DCR2 (578 aa).

An ATP-binding site is contributed by 116 to 123 (GRRWFGKS).

The protein localises to the cytoplasm. In terms of biological role, required for cell cycle progression. Has a role in the completion of START. This chain is Phosphatase DCR2 (DCR2), found in Saccharomyces cerevisiae (strain ATCC 204508 / S288c) (Baker's yeast).